The following is a 340-amino-acid chain: N(4)-(Beta-N-acetylglucosaminyl)-L-asparaginase (340 aa).

The first 45 residues, 1–45 (MRIIYKQQTMNNNRRDFIKKLGIATAAIAINPLEAKNLLDTSEPK), serve as a signal peptide directing secretion. The Nucleophile role is filled by threonine 197. Substrate-binding positions include 225-228 (RVGD) and 248-251 (TGHG).

This sequence belongs to the Ntn-hydrolase family. Heterotetramer of two alpha and two beta chains arranged as a dimer of alpha/beta heterodimers. Cleaved into an alpha and beta chain by autocatalysis; this activates the enzyme. The N-terminal residue of the beta subunit is responsible for the nucleophile hydrolase activity.

It is found in the periplasm. The enzyme catalyses N(4)-(beta-N-acetyl-D-glucosaminyl)-L-asparagine + H2O = N-acetyl-beta-D-glucosaminylamine + L-aspartate + H(+). Its function is as follows. Cleaves the GlcNAc-Asn bond which joins oligosaccharides to the peptide of asparagine-linked glycoproteins. Requires that the glycosylated asparagine moiety is not substituted on its N-(R1) and C- (R2) terminus. This Elizabethkingia miricola (Chryseobacterium miricola) protein is N(4)-(Beta-N-acetylglucosaminyl)-L-asparaginase.